Reading from the N-terminus, the 182-residue chain is Ribosome maturation factor RimM (182 aa).

A PRC barrel domain is found at 102–182 (EEGDYYWKDL…TIEVDWDPGF (81 aa)).

It belongs to the RimM family. Binds ribosomal protein uS19.

It is found in the cytoplasm. Functionally, an accessory protein needed during the final step in the assembly of 30S ribosomal subunit, possibly for assembly of the head region. Essential for efficient processing of 16S rRNA. May be needed both before and after RbfA during the maturation of 16S rRNA. It has affinity for free ribosomal 30S subunits but not for 70S ribosomes. This is Ribosome maturation factor RimM from Salmonella enteritidis PT4 (strain P125109).